We begin with the raw amino-acid sequence, 214 residues long: Imidazole glycerol phosphate synthase subunit HisH (214 aa).

The Glutamine amidotransferase type-1 domain occupies 3 to 211 (IIAVIDYDMG…VEQVQATLAT (209 aa)). C81 serves as the catalytic Nucleophile. Active-site residues include H186 and E188.

In terms of assembly, heterodimer of HisH and HisF.

The protein localises to the cytoplasm. It carries out the reaction 5-[(5-phospho-1-deoxy-D-ribulos-1-ylimino)methylamino]-1-(5-phospho-beta-D-ribosyl)imidazole-4-carboxamide + L-glutamine = D-erythro-1-(imidazol-4-yl)glycerol 3-phosphate + 5-amino-1-(5-phospho-beta-D-ribosyl)imidazole-4-carboxamide + L-glutamate + H(+). The catalysed reaction is L-glutamine + H2O = L-glutamate + NH4(+). It functions in the pathway amino-acid biosynthesis; L-histidine biosynthesis; L-histidine from 5-phospho-alpha-D-ribose 1-diphosphate: step 5/9. Its function is as follows. IGPS catalyzes the conversion of PRFAR and glutamine to IGP, AICAR and glutamate. The HisH subunit catalyzes the hydrolysis of glutamine to glutamate and ammonia as part of the synthesis of IGP and AICAR. The resulting ammonia molecule is channeled to the active site of HisF. The polypeptide is Imidazole glycerol phosphate synthase subunit HisH (Acaryochloris marina (strain MBIC 11017)).